Reading from the N-terminus, the 323-residue chain is Putative ABC transporter substrate-binding lipoprotein YhfQ (323 aa).

The signal sequence occupies residues 1-19 (MKKTLIILTVLLLSVLTAA). Cys20 carries the N-palmitoyl cysteine lipid modification. The S-diacylglycerol cysteine moiety is linked to residue Cys20. The region spanning 51-322 (RVVVLELGFI…ELQKEMPAAK (272 aa)) is the Fe/B12 periplasmic-binding domain.

This sequence belongs to the bacterial solute-binding protein 8 family. Interacts with FloT.

It is found in the cell membrane. The protein localises to the membrane raft. In Bacillus subtilis (strain 168), this protein is Putative ABC transporter substrate-binding lipoprotein YhfQ (yhfQ).